A 1024-amino-acid chain; its full sequence is Beta-galactosidase (1024 aa).

Residues asparagine 103 and aspartate 202 each contribute to the substrate site. Residue aspartate 202 participates in Na(+) binding. The Mg(2+) site is built by glutamate 417, histidine 419, and glutamate 462. Substrate-binding positions include glutamate 462 and 538 to 541; that span reads EYAH. Catalysis depends on glutamate 462, which acts as the Proton donor. Glutamate 538 serves as the catalytic Nucleophile. Residue asparagine 598 participates in Mg(2+) binding. 2 residues coordinate Na(+): phenylalanine 602 and asparagine 605. Residues asparagine 605 and tryptophan 1000 each coordinate substrate.

Belongs to the glycosyl hydrolase 2 family. In terms of assembly, homotetramer. The cofactor is Mg(2+). It depends on Na(+) as a cofactor.

It catalyses the reaction Hydrolysis of terminal non-reducing beta-D-galactose residues in beta-D-galactosides.. This Escherichia coli O6:H1 (strain CFT073 / ATCC 700928 / UPEC) protein is Beta-galactosidase.